The primary structure comprises 374 residues: Isopentenyl-diphosphate delta-isomerase (374 aa).

Position 13-14 (13-14 (RK)) interacts with substrate. FMN-binding positions include 71 to 73 (GMT), S104, and N132. Substrate is bound at residue 104 to 106 (SQR). Residue Q171 coordinates substrate. E172 provides a ligand contact to Mg(2+). Residues K203, T233, 282-284 (GMR), and 303-304 (AL) contribute to the FMN site.

The protein belongs to the IPP isomerase type 2 family. As to quaternary structure, homooctamer. Dimer of tetramers. FMN is required as a cofactor. The cofactor is NADPH. Requires Mg(2+) as cofactor.

The protein resides in the cytoplasm. The catalysed reaction is isopentenyl diphosphate = dimethylallyl diphosphate. Functionally, involved in the biosynthesis of isoprenoids. Catalyzes the 1,3-allylic rearrangement of the homoallylic substrate isopentenyl (IPP) to its allylic isomer, dimethylallyl diphosphate (DMAPP). This chain is Isopentenyl-diphosphate delta-isomerase, found in Thermococcus kodakarensis (strain ATCC BAA-918 / JCM 12380 / KOD1) (Pyrococcus kodakaraensis (strain KOD1)).